The following is a 277-amino-acid chain: NADPH-dependent 7-cyano-7-deazaguanine reductase (277 aa).

Ile-83 to Ser-85 is a binding site for substrate. An NADPH-binding site is contributed by Ser-85 to Lys-86. The Thioimide intermediate role is filled by Cys-184. Asp-191 (proton donor) is an active-site residue. His-223–Glu-224 provides a ligand contact to substrate. Arg-252 to Gly-253 contacts NADPH.

It belongs to the GTP cyclohydrolase I family. QueF type 2 subfamily. In terms of assembly, homodimer.

It localises to the cytoplasm. The catalysed reaction is 7-aminomethyl-7-carbaguanine + 2 NADP(+) = 7-cyano-7-deazaguanine + 2 NADPH + 3 H(+). The protein operates within tRNA modification; tRNA-queuosine biosynthesis. Catalyzes the NADPH-dependent reduction of 7-cyano-7-deazaguanine (preQ0) to 7-aminomethyl-7-deazaguanine (preQ1). This chain is NADPH-dependent 7-cyano-7-deazaguanine reductase, found in Cupriavidus necator (strain ATCC 17699 / DSM 428 / KCTC 22496 / NCIMB 10442 / H16 / Stanier 337) (Ralstonia eutropha).